The following is a 221-amino-acid chain: Small ribosomal subunit protein uS3 (221 aa).

Residues 39 to 107 (LRKFLKDKLK…EVFLSIQEVR (69 aa)) form the KH type-2 domain.

This sequence belongs to the universal ribosomal protein uS3 family. As to quaternary structure, part of the 30S ribosomal subunit. Forms a tight complex with proteins S10 and S14.

Its function is as follows. Binds the lower part of the 30S subunit head. Binds mRNA in the 70S ribosome, positioning it for translation. The chain is Small ribosomal subunit protein uS3 from Bdellovibrio bacteriovorus (strain ATCC 15356 / DSM 50701 / NCIMB 9529 / HD100).